A 68-amino-acid chain; its full sequence is Small cysteine-rich protein 5 (68 aa).

The signal sequence occupies residues 1-24; it reads MAVKFHLCLLLIILVGMGAHVAFA.

The protein belongs to the Cnidaria small cysteine-rich protein (SCRiP) family. gamma subfamily. Post-translationally, contains 4 disulfide bonds.

It localises to the secreted. Its subcellular location is the nematocyst. Induces neurotoxic symptoms on zebrafish. Has also been claimed to be implied in calcification, but tests on homolog proteins suggest that proteins of this family have a neurotoxic function and not a calcification function. This is Small cysteine-rich protein 5 from Orbicella faveolata (Mountainous star coral).